A 396-amino-acid polypeptide reads, in one-letter code: Purine ribonucleoside efflux pump NepI (396 aa).

Residues 1-21 (MSEFIAENRGADAITRPNWSA) lie on the Cytoplasmic side of the membrane. Residues 22-42 (VFSVAFCVACLIIVEFLPVSL) form a helical membrane-spanning segment. Residues 43-54 (LTPMAQDLGISE) lie on the Periplasmic side of the membrane. A helical transmembrane segment spans residues 55-75 (GVAGQSVTVTAFVAMFASLFI). Topologically, residues 76-85 (TQTIQATDRC) are cytoplasmic. A helical transmembrane segment spans residues 86–106 (YVVILFAVLLTLSCLLVSFAN). Position 107 (Ser-107) is a topological domain, periplasmic. The helical transmembrane segment at 108–128 (FSLLLIGRACLGLALGGFWAM) threads the bilayer. Residues 129 to 147 (SASLTMRLVPPRTVPKALS) are Cytoplasmic-facing. The chain crosses the membrane as a helical span at residues 148-168 (VIFGAVSIALVIAAPLGSFLG). The Periplasmic segment spans residues 169 to 175 (ELIGWRN). Residues 176–196 (VFNAAAVMGVLCIFWIIKSLP) form a helical membrane-spanning segment. The Cytoplasmic segment spans residues 197 to 215 (SLPGEPSHQKQNTFRLLQR). A helical membrane pass occupies residues 216–236 (PGVMAGMIAIFMSFAGQFAFF). Residues 237-255 (TYIRPVYMNLAGFGVDGLT) are Periplasmic-facing. The helical transmembrane segment at 256 to 276 (LVLLSFGIASFIGTSLSSFIL) threads the bilayer. Residues 277–281 (KRSVK) lie on the Cytoplasmic side of the membrane. A helical membrane pass occupies residues 282–302 (LALAGAPLILAVSALVLTLWG). Over 303 to 305 (SDK) the chain is Periplasmic. Residues 306–326 (IVATGVAIIWGLTFALVPVGW) traverse the membrane as a helical segment. Topologically, residues 327–343 (STWITRSLADQAEKAGS) are cytoplasmic. The chain crosses the membrane as a helical span at residues 344 to 364 (IQVAVIQLANTCGAAIGGYAL). Over 365-366 (DN) the chain is Periplasmic. Residues 367–387 (IGLTSPLMLSGTLMLLTALLV) form a helical membrane-spanning segment. Topologically, residues 388–396 (TAKVKMKKS) are cytoplasmic.

It belongs to the major facilitator superfamily. DHA1 family. NepI (TC 2.A.1.2.26) subfamily.

The protein resides in the cell inner membrane. It carries out the reaction inosine(in) + H(+)(out) = inosine(out) + H(+)(in). The catalysed reaction is guanosine(in) + H(+)(out) = guanosine(out) + H(+)(in). Functionally, involved in the efflux of purine ribonucleosides, such as inosine and guanosine. The polypeptide is Purine ribonucleoside efflux pump NepI (Shigella boydii serotype 4 (strain Sb227)).